The chain runs to 1067 residues: SURP and G-patch domain-containing protein 2 (1067 aa).

Residue Ser93 is modified to Phosphoserine. The segment covering 177-189 has biased composition (basic and acidic residues); that stretch reads KESRDYDLDHPGE. The tract at residues 177-199 is disordered; that stretch reads KESRDYDLDHPGEVDSVSRSSGQ. Ser206 is subject to Phosphoserine. Lys219 participates in a covalent cross-link: Glycyl lysine isopeptide (Lys-Gly) (interchain with G-Cter in SUMO2). Position 265 is a phosphothreonine (Thr265). Ser267 and Ser586 each carry phosphoserine. One copy of the SURP motif 1 repeat lies at 573–616; sequence IDQLVMRVIQGRLSPRERTLLLQDPAYWFLSDESSLEYKYYKLK. Residues 668 to 767 are disordered; the sequence is SQGPRGLKAK…CPSANMDAKT (100 aa). Over residues 680 to 691 the composition is skewed to polar residues; that stretch reads TTAQQTSLSSGT. Ser740 carries the post-translational modification Phosphoserine. At Thr744 the chain carries Phosphothreonine. Residues 770–813 form an SURP motif 2 repeat; it reads TAEKLARFVAQVGPEIEQFSIENSTDNPDLWFLHDQSSSAFKFY. The segment covering 825-840 has biased composition (polar residues); it reads SFQSTGEAGDSVQSPT. Disordered stretches follow at residues 825–944 and 967–991; these read SFQS…KSLK and RIAYDRPRGRPIAKKKKPKDMEFSQ. The residue at position 838 (Ser838) is a Phosphoserine. A compositionally biased stretch (basic and acidic residues) spans 843 to 856; it reads KEGKGEPQEGHPEQ. Residues 866-883 are compositionally biased toward acidic residues; that stretch reads LPEEEEEDEEESEDEGGE. The segment covering 919-931 has biased composition (polar residues); that stretch reads ASTPGLSQASSGS. Positions 975 to 984 are enriched in basic residues; the sequence is GRPIAKKKKP. The Nuclear localization signal signature appears at 980-985; that stretch reads KKKKPK. The 47-residue stretch at 996 to 1042 folds into the G-patch domain; sequence DKNVGFQMLQKMGWKEGHGLGSLGKGIREPVSVGALSEGEGLGADGP.

The protein localises to the nucleus. Functionally, may play a role in mRNA splicing. In Mus musculus (Mouse), this protein is SURP and G-patch domain-containing protein 2 (Sugp2).